A 256-amino-acid polypeptide reads, in one-letter code: CCAAT/enhancer-binding protein delta (256 aa).

Ser2 carries the post-translational modification N-acetylserine. 3 disordered regions span residues 18–40, 92–121, and 139–206; these read TAEPAAFYEPGRAGKPGRGAEPA, GGPARLGGPGPAPRPLKREPDWGDGDAPGS, and AAAQ…NQEM. Lys108 participates in a covalent cross-link: Glycyl lysine isopeptide (Lys-Gly) (interchain with G-Cter in SUMO). The segment covering 143–162 has biased composition (pro residues); that stretch reads PTPPASPEPPRRSPAPPAPG. Positions 164-188 are enriched in basic and acidic residues; the sequence is ARDKAAGKRGPDRGSPEYRQRRERN. The region spanning 178–241 is the bZIP domain; it reads SPEYRQRRER…AGLRRFFKQL (64 aa). The segment at 182 to 209 is basic motif; that stretch reads RQRRERNNIAVRKSRDKAKRRNQEMQQK. Residues 213-241 are leucine-zipper; sequence LSAENEKLQQRVEQLTRDLAGLRRFFKQL.

Belongs to the bZIP family. C/EBP subfamily. Binds DNA as a homodimer and as a heterodimer. Can form stable heterodimers with CEBPB. Can form stable heterodimers with CEBPA and CEBPE. Directly interacts with SPI1/PU.1; this interaction does not affect DNA-binding properties of each partner. Interacts with PRDM16.

The protein resides in the nucleus. Its function is as follows. Transcription activator that recognizes two different DNA motifs: the CCAAT homology common to many promoters and the enhanced core homology common to many enhancers. Important transcription factor regulating the expression of genes involved in immune and inflammatory responses. Transcriptional activator that enhances IL6 transcription alone and as heterodimer with CEBPB. The sequence is that of CCAAT/enhancer-binding protein delta (CEBPD) from Bos taurus (Bovine).